The following is a 337-amino-acid chain: Ketol-acid reductoisomerase (NADP(+)) (337 aa).

A KARI N-terminal Rossmann domain is found at Met-1–Thr-180. Residues Tyr-24–Gln-27, Arg-47, and Ser-51 contribute to the NADP(+) site. His-106 is a catalytic residue. Gly-132 contacts NADP(+). The region spanning Thr-181–Ile-326 is the KARI C-terminal knotted domain. Mg(2+) contacts are provided by Asp-189, Glu-193, Glu-225, and Glu-229. Substrate is bound at residue Ser-250.

Belongs to the ketol-acid reductoisomerase family. The cofactor is Mg(2+).

It catalyses the reaction (2R)-2,3-dihydroxy-3-methylbutanoate + NADP(+) = (2S)-2-acetolactate + NADPH + H(+). It carries out the reaction (2R,3R)-2,3-dihydroxy-3-methylpentanoate + NADP(+) = (S)-2-ethyl-2-hydroxy-3-oxobutanoate + NADPH + H(+). It participates in amino-acid biosynthesis; L-isoleucine biosynthesis; L-isoleucine from 2-oxobutanoate: step 2/4. It functions in the pathway amino-acid biosynthesis; L-valine biosynthesis; L-valine from pyruvate: step 2/4. Functionally, involved in the biosynthesis of branched-chain amino acids (BCAA). Catalyzes an alkyl-migration followed by a ketol-acid reduction of (S)-2-acetolactate (S2AL) to yield (R)-2,3-dihydroxy-isovalerate. In the isomerase reaction, S2AL is rearranged via a Mg-dependent methyl migration to produce 3-hydroxy-3-methyl-2-ketobutyrate (HMKB). In the reductase reaction, this 2-ketoacid undergoes a metal-dependent reduction by NADPH to yield (R)-2,3-dihydroxy-isovalerate. This is Ketol-acid reductoisomerase (NADP(+)) from Neisseria gonorrhoeae (strain ATCC 700825 / FA 1090).